Consider the following 235-residue polypeptide: Large ribosomal subunit protein uL2 (235 aa).

Residues 197–218 are disordered; it reads VAMNPVDHPHGGGEGKTSGGRH.

This sequence belongs to the universal ribosomal protein uL2 family. Part of the 50S ribosomal subunit. Forms a bridge to the 30S subunit in the 70S ribosome.

Its function is as follows. One of the primary rRNA binding proteins. Required for association of the 30S and 50S subunits to form the 70S ribosome, for tRNA binding and peptide bond formation. It has been suggested to have peptidyltransferase activity; this is somewhat controversial. Makes several contacts with the 16S rRNA in the 70S ribosome. The protein is Large ribosomal subunit protein uL2 (rplB) of Carsonella ruddii (strain PV).